The sequence spans 353 residues: 3-isopropylmalate dehydrogenase (353 aa).

Gly-75 to Glu-88 serves as a coordination point for NAD(+). Substrate is bound by residues Arg-95, Arg-105, Arg-133, and Asp-219. Positions 219, 243, and 247 each coordinate Mg(2+). Gly-276 to Asn-288 is a binding site for NAD(+).

Belongs to the isocitrate and isopropylmalate dehydrogenases family. LeuB type 1 subfamily. In terms of assembly, homodimer. It depends on Mg(2+) as a cofactor. Mn(2+) is required as a cofactor.

It is found in the cytoplasm. The enzyme catalyses (2R,3S)-3-isopropylmalate + NAD(+) = 4-methyl-2-oxopentanoate + CO2 + NADH. Its pathway is amino-acid biosynthesis; L-leucine biosynthesis; L-leucine from 3-methyl-2-oxobutanoate: step 3/4. Its function is as follows. Catalyzes the oxidation of 3-carboxy-2-hydroxy-4-methylpentanoate (3-isopropylmalate) to 3-carboxy-4-methyl-2-oxopentanoate. The product decarboxylates to 4-methyl-2 oxopentanoate. The sequence is that of 3-isopropylmalate dehydrogenase from Chlorobium luteolum (strain DSM 273 / BCRC 81028 / 2530) (Pelodictyon luteolum).